A 543-amino-acid chain; its full sequence is MTTDFTPWPEALAAQYRQLGYWQDKTLLDYLQQSAERTPNALALVGDNQQWRYQAMLERIEQLAAGFTELGLGCGDNVVLQLGNVAEFYLCFFALLRQGIRPILALPAHRLAEIRYFCQHSQAKAYLIDGAQRPFDYQALAQELLACCPTLQTVIVRGQTRVTDPKFIELASCYSASSCQANADPNQIAFFQLSGGTTGTPKLIPRTHNDYAYSVTASVEICRFDQHTRYLCVLPAAHNFPLSSPGALGVFWAGGCVVLSQDASPQHAFKLIEQHKITVTALVPPLALLWMDHAEKSTYDLSSLHFVQVGGAKFSEAAARRLPKALGCQLQQVFGMAEGLVNYTRLDDSAELIATTQGRPISAHDQLLVVDEQGQPVASGEEGYLLTQGPYTIRGYYRADQHNQRAFNAQGFYITGDKVKLSSEGYVIVTGRAKDQINRGGEKIAAEEVENQLLHHPAVHDAALIAISDEYLGERSCAVIVLKPEQSVNTIQLKRFLHQAGLADYKIPDQIQFIDQLPKTSVGKIDKNALRRRFDTLGLALMS.

The helical transmembrane segment at 240–259 (FPLSSPGALGVFWAGGCVVL) threads the bilayer.

It belongs to the ATP-dependent AMP-binding enzyme family.

It is found in the cell inner membrane. The enzyme catalyses 2,3-dihydroxybenzoate + holo-[ACP] + ATP = 2,3-dihydroxybenzoyl-[ACP] + AMP + diphosphate. It functions in the pathway siderophore biosynthesis; vibriobactin biosynthesis. Functionally, activation of the carboxylate group of 2,3-dihydroxy-benzoate (DHB), via ATP-dependent PPi exchange reactions, to the acyladenylate, preparing that molecule for the final stages of vibriobactin synthesis. This Vibrio cholerae serotype O1 (strain ATCC 39315 / El Tor Inaba N16961) protein is Vibriobactin-specific 2,3-dihydroxybenzoate-AMP ligase (vibE).